The sequence spans 122 residues: Fluoride-specific ion channel FluC 2 (122 aa).

Transmembrane regions (helical) follow at residues 1–21 (MAWLYVGCGGIAGTLARFLLS), 33–53 (PLGTLFVNLSGAFLLGLLLAL), 62–82 (VTLALGTGFVGAYTTFSTFTY), and 102–122 (GSILGGLLLAWLGWLAAGSLF). Na(+)-binding residues include G72 and T75.

This sequence belongs to the fluoride channel Fluc/FEX (TC 1.A.43) family.

Its subcellular location is the cell membrane. The catalysed reaction is fluoride(in) = fluoride(out). With respect to regulation, na(+) is not transported, but it plays an essential structural role and its presence is essential for fluoride channel function. In terms of biological role, fluoride-specific ion channel. Important for reducing fluoride concentration in the cell, thus reducing its toxicity. This Moorella thermoacetica (strain ATCC 39073 / JCM 9320) protein is Fluoride-specific ion channel FluC 2.